The sequence spans 292 residues: MSAFIATIPRPSLAERFADLAVGALIDEAELSPKPALVDRRGSGAHRDLDLKLMHASARALWPAFHAMAEAARSLAELDRPLRETIGRLGREGEARMLAVTGGVNTHRGAIWALGLLVTAAALEPQRLAPEQVSLRAARLARLEDRQMPAQPPSHGERVRQRYGVRGAREEARGGFPGVIRHGLPQLRRSRAAGCDENHARLDALLAIMAQLEDTCVLHRAGLEGLRCMQDGARAVLVAGGSASLAGRRSLRDLELGLLELNASPGGAADLLAVTLFLDRLEPMLGAPIGSL.

It belongs to the CitG/MdcB family.

The enzyme catalyses 3'-dephospho-CoA + ATP = 2'-(5''-triphospho-alpha-D-ribosyl)-3'-dephospho-CoA + adenine. Involved in the formation of 2-(5''-phosphoribosyl)-3'-dephosphocoenzyme-A, the prosthetic group of the acyl-carrier protein of the malonate decarboxylase. This is Probable 2-(5''-triphosphoribosyl)-3'-dephosphocoenzyme-A synthase from Azotobacter vinelandii (strain DJ / ATCC BAA-1303).